Consider the following 255-residue polypeptide: Probable pyridoxal 5'-phosphate synthase subunit PDX2 (255 aa).

Position 46–48 (46–48) interacts with L-glutamine; it reads GES. Cys78 acts as the Nucleophile in catalysis. L-glutamine-binding positions include Arg108 and 142–143; that span reads IR. Residues His202 and Glu204 each act as charge relay system in the active site. The segment at 225–255 is disordered; it reads GASSSSSKTIVSVGETSAGPEPAKPDLPIFQ.

Belongs to the glutaminase PdxT/SNO family. As to quaternary structure, interacts with PDX1.1 or PDX1.3, but not with PDX1.2. Binds to RPA2A. As to expression, strongly expressed in roots, stems, leaves and flowers.

Its subcellular location is the cytoplasm. It carries out the reaction aldehydo-D-ribose 5-phosphate + D-glyceraldehyde 3-phosphate + L-glutamine = pyridoxal 5'-phosphate + L-glutamate + phosphate + 3 H2O + H(+). The catalysed reaction is L-glutamine + H2O = L-glutamate + NH4(+). Its pathway is cofactor biosynthesis; pyridoxal 5'-phosphate biosynthesis. Functionally, catalyzes the hydrolysis of glutamine to glutamate and ammonia as part of the biosynthesis of pyridoxal 5'-phosphate. The resulting ammonia molecule is channeled to the active site of PDX1. Involved in the indirect resistance to singlet oxygen-generating photosensitizers. This chain is Probable pyridoxal 5'-phosphate synthase subunit PDX2 (PDX2), found in Arabidopsis thaliana (Mouse-ear cress).